A 130-amino-acid chain; its full sequence is Protein ApaG (130 aa).

In terms of domain architecture, ApaG spans 3-127; it reads KAETRGISVT…FSLDSPHVRR (125 aa).

This Methylobacterium radiotolerans (strain ATCC 27329 / DSM 1819 / JCM 2831 / NBRC 15690 / NCIMB 10815 / 0-1) protein is Protein ApaG.